Reading from the N-terminus, the 95-residue chain is Small ribosomal subunit protein uS14 (95 aa).

Belongs to the universal ribosomal protein uS14 family. In terms of assembly, part of the 30S ribosomal subunit. Contacts proteins S3 and S10.

Binds 16S rRNA, required for the assembly of 30S particles and may also be responsible for determining the conformation of the 16S rRNA at the A site. The sequence is that of Small ribosomal subunit protein uS14 from Fusobacterium nucleatum subsp. nucleatum (strain ATCC 25586 / DSM 15643 / BCRC 10681 / CIP 101130 / JCM 8532 / KCTC 2640 / LMG 13131 / VPI 4355).